Here is a 151-residue protein sequence, read N- to C-terminus: NAD(P)H-quinone oxidoreductase subunit N (151 aa).

Belongs to the complex I NdhN subunit family. NDH-1 can be composed of about 15 different subunits; different subcomplexes with different compositions have been identified which probably have different functions.

It is found in the cellular thylakoid membrane. The enzyme catalyses a plastoquinone + NADH + (n+1) H(+)(in) = a plastoquinol + NAD(+) + n H(+)(out). It catalyses the reaction a plastoquinone + NADPH + (n+1) H(+)(in) = a plastoquinol + NADP(+) + n H(+)(out). In terms of biological role, NDH-1 shuttles electrons from an unknown electron donor, via FMN and iron-sulfur (Fe-S) centers, to quinones in the respiratory and/or the photosynthetic chain. The immediate electron acceptor for the enzyme in this species is believed to be plastoquinone. Couples the redox reaction to proton translocation, and thus conserves the redox energy in a proton gradient. Cyanobacterial NDH-1 also plays a role in inorganic carbon-concentration. The sequence is that of NAD(P)H-quinone oxidoreductase subunit N from Acaryochloris marina (strain MBIC 11017).